The sequence spans 185 residues: Ribosome-recycling factor (185 aa).

Belongs to the RRF family.

It is found in the cytoplasm. Functionally, responsible for the release of ribosomes from messenger RNA at the termination of protein biosynthesis. May increase the efficiency of translation by recycling ribosomes from one round of translation to another. This is Ribosome-recycling factor from Buchnera aphidicola subsp. Acyrthosiphon pisum (strain APS) (Acyrthosiphon pisum symbiotic bacterium).